Here is an 82-residue protein sequence, read N- to C-terminus: Acyl carrier protein (82 aa).

Residues 3–78 (QEIFERVKKV…KAVEHISEKV (76 aa)) form the Carrier domain. Ser38 bears the O-(pantetheine 4'-phosphoryl)serine mark.

Belongs to the acyl carrier protein (ACP) family. In terms of processing, 4'-phosphopantetheine is transferred from CoA to a specific serine of apo-ACP by AcpS. This modification is essential for activity because fatty acids are bound in thioester linkage to the sulfhydryl of the prosthetic group.

The protein resides in the cytoplasm. Its pathway is lipid metabolism; fatty acid biosynthesis. In terms of biological role, carrier of the growing fatty acid chain in fatty acid biosynthesis. The sequence is that of Acyl carrier protein from Gloeothece citriformis (strain PCC 7424) (Cyanothece sp. (strain PCC 7424)).